We begin with the raw amino-acid sequence, 261 residues long: MSKRILLTNDDGVYAAGIRAAYRSVSDLGDVTVSAPAQQQSGVGRSISIFEPLRITRTTIDGIEVHAIGGTPTDSVILGIFTIMKELPDLILSGFNIGENISTDTITTSGTIGAALEGASYGVPAIAASLQVTEEGLKFDDLRDFQHDFDVGIKFVNGVAKKVLKNGLPENVDLLNINIPHFVEEDSEVEITRLARKFFRTGVEERRDPRGRPYYWIAGDLIHTAEKGTDVNAIEKGHISVTPISLDATSPINFSEIEHLM.

4 residues coordinate a divalent metal cation: Asp-10, Asp-11, Ser-41, and Asn-96.

This sequence belongs to the SurE nucleotidase family. A divalent metal cation is required as a cofactor.

The protein localises to the cytoplasm. The catalysed reaction is a ribonucleoside 5'-phosphate + H2O = a ribonucleoside + phosphate. Its function is as follows. Nucleotidase that shows phosphatase activity on nucleoside 5'-monophosphates. The sequence is that of 5'-nucleotidase SurE from Methanococcoides burtonii (strain DSM 6242 / NBRC 107633 / OCM 468 / ACE-M).